The primary structure comprises 199 residues: MYEYLTGLVTVVAPQYIVVDVNGVGYKLLVANPYRYQEDRTKKVQVYVYQAVREDNISLFGFTDQNEKNLFMQLINVSGIGPKSALAILANPDHQGLVDAITNNNVSYLTKFPGIGKKTASQIVLDLRDKLTNESSSSLFATTQLTVDATVNRELKDALEALAALGYKERDIKKVQKALMKEEQMATDEYLRQALRLLN.

Residues 1–63 are domain I; sequence MYEYLTGLVT…EDNISLFGFT (63 aa). Residues 64 to 142 form a domain II region; it reads DQNEKNLFMQ…NESSSSLFAT (79 aa). Positions 143–149 are flexible linker; the sequence is TQLTVDA. The segment at 150-199 is domain III; it reads TVNRELKDALEALAALGYKERDIKKVQKALMKEEQMATDEYLRQALRLLN.

It belongs to the RuvA family. As to quaternary structure, homotetramer. Forms an RuvA(8)-RuvB(12)-Holliday junction (HJ) complex. HJ DNA is sandwiched between 2 RuvA tetramers; dsDNA enters through RuvA and exits via RuvB. An RuvB hexamer assembles on each DNA strand where it exits the tetramer. Each RuvB hexamer is contacted by two RuvA subunits (via domain III) on 2 adjacent RuvB subunits; this complex drives branch migration. In the full resolvosome a probable DNA-RuvA(4)-RuvB(12)-RuvC(2) complex forms which resolves the HJ.

It localises to the cytoplasm. Functionally, the RuvA-RuvB-RuvC complex processes Holliday junction (HJ) DNA during genetic recombination and DNA repair, while the RuvA-RuvB complex plays an important role in the rescue of blocked DNA replication forks via replication fork reversal (RFR). RuvA specifically binds to HJ cruciform DNA, conferring on it an open structure. The RuvB hexamer acts as an ATP-dependent pump, pulling dsDNA into and through the RuvAB complex. HJ branch migration allows RuvC to scan DNA until it finds its consensus sequence, where it cleaves and resolves the cruciform DNA. The polypeptide is Holliday junction branch migration complex subunit RuvA (Limosilactobacillus reuteri subsp. reuteri (strain JCM 1112) (Lactobacillus reuteri)).